Reading from the N-terminus, the 1043-residue chain is Isoleucine--tRNA ligase (1043 aa).

The 'HIGH' region motif lies at 48 to 58; that stretch reads PFATGLPHYGH. A 'KMSKS' region motif is present at residues 591–595; it reads KMSKR. Lys594 provides a ligand contact to ATP.

Belongs to the class-I aminoacyl-tRNA synthetase family. IleS type 2 subfamily. As to quaternary structure, monomer. It depends on Zn(2+) as a cofactor.

The protein localises to the cytoplasm. It carries out the reaction tRNA(Ile) + L-isoleucine + ATP = L-isoleucyl-tRNA(Ile) + AMP + diphosphate. Its function is as follows. Catalyzes the attachment of isoleucine to tRNA(Ile). As IleRS can inadvertently accommodate and process structurally similar amino acids such as valine, to avoid such errors it has two additional distinct tRNA(Ile)-dependent editing activities. One activity is designated as 'pretransfer' editing and involves the hydrolysis of activated Val-AMP. The other activity is designated 'posttransfer' editing and involves deacylation of mischarged Val-tRNA(Ile). This chain is Isoleucine--tRNA ligase, found in Chlamydia pneumoniae (Chlamydophila pneumoniae).